The sequence spans 342 residues: tRNA dimethylallyltransferase (342 aa).

A compositionally biased stretch (polar residues) spans 1–13 (MNDTTAKTLNCSP). The interval 1–21 (MNDTTAKTLNCSPASRDGFPE) is disordered. An ATP-binding site is contributed by 40–47 (GPTGVGKT). 42–47 (TGVGKT) contacts substrate. Interaction with substrate tRNA regions lie at residues 65-68 (DSMQ) and 189-193 (QRILR).

It belongs to the IPP transferase family. As to quaternary structure, monomer. The cofactor is Mg(2+).

The enzyme catalyses adenosine(37) in tRNA + dimethylallyl diphosphate = N(6)-dimethylallyladenosine(37) in tRNA + diphosphate. Its function is as follows. Catalyzes the transfer of a dimethylallyl group onto the adenine at position 37 in tRNAs that read codons beginning with uridine, leading to the formation of N6-(dimethylallyl)adenosine (i(6)A). This is tRNA dimethylallyltransferase from Syntrophobacter fumaroxidans (strain DSM 10017 / MPOB).